Reading from the N-terminus, the 134-residue chain is Small ribosomal subunit protein uS12 (134 aa).

At aspartate 89 the chain carries 3-methylthioaspartic acid. The interval 103 to 134 (DTAGVKDRKQGRSKYGAKRPKPGEAAATGKKK) is disordered. The segment covering 113-122 (GRSKYGAKRP) has biased composition (basic residues).

It belongs to the universal ribosomal protein uS12 family. Part of the 30S ribosomal subunit. Contacts proteins S8 and S17. May interact with IF1 in the 30S initiation complex.

With S4 and S5 plays an important role in translational accuracy. Functionally, interacts with and stabilizes bases of the 16S rRNA that are involved in tRNA selection in the A site and with the mRNA backbone. Located at the interface of the 30S and 50S subunits, it traverses the body of the 30S subunit contacting proteins on the other side and probably holding the rRNA structure together. The combined cluster of proteins S8, S12 and S17 appears to hold together the shoulder and platform of the 30S subunit. This is Small ribosomal subunit protein uS12 from Thermosynechococcus vestitus (strain NIES-2133 / IAM M-273 / BP-1).